The chain runs to 156 residues: Small ribosomal subunit protein uS7 (156 aa).

The protein belongs to the universal ribosomal protein uS7 family. As to quaternary structure, part of the 30S ribosomal subunit. Contacts proteins S9 and S11.

Its function is as follows. One of the primary rRNA binding proteins, it binds directly to 16S rRNA where it nucleates assembly of the head domain of the 30S subunit. Is located at the subunit interface close to the decoding center, probably blocks exit of the E-site tRNA. The sequence is that of Small ribosomal subunit protein uS7 from Lachnospira eligens (strain ATCC 27750 / DSM 3376 / VPI C15-48 / C15-B4) (Eubacterium eligens).